Reading from the N-terminus, the 104-residue chain is L-rhamnose mutarotase (104 aa).

Substrate is bound at residue Y18. H22 acts as the Proton donor in catalysis. Substrate is bound by residues Y41 and 76–77 (WW).

Belongs to the rhamnose mutarotase family. Homodimer.

The protein localises to the cytoplasm. It catalyses the reaction alpha-L-rhamnose = beta-L-rhamnose. It participates in carbohydrate metabolism; L-rhamnose metabolism. Involved in the anomeric conversion of L-rhamnose. This Salmonella arizonae (strain ATCC BAA-731 / CDC346-86 / RSK2980) protein is L-rhamnose mutarotase.